The chain runs to 396 residues: Elongation factor Tu 2 (396 aa).

One can recognise a tr-type G domain in the interval 10–206; sequence KPHVNIGTIG…AVDSYIPTPQ (197 aa). The segment at 19–26 is G1; sequence GHVDHGKT. 19-26 is a GTP binding site; that stretch reads GHVDHGKT. Threonine 26 serves as a coordination point for Mg(2+). Positions 60–64 are G2; that stretch reads GITIS. Positions 81 to 84 are G3; the sequence is DCPG. GTP is bound by residues 81-85 and 136-139; these read DCPGH and NKVD. Positions 136-139 are G4; the sequence is NKVD. A G5 region spans residues 174–176; that stretch reads SAL.

Belongs to the TRAFAC class translation factor GTPase superfamily. Classic translation factor GTPase family. EF-Tu/EF-1A subfamily. Monomer.

Its subcellular location is the cytoplasm. The enzyme catalyses GTP + H2O = GDP + phosphate + H(+). In terms of biological role, GTP hydrolase that promotes the GTP-dependent binding of aminoacyl-tRNA to the A-site of ribosomes during protein biosynthesis. The chain is Elongation factor Tu 2 from Myxococcus xanthus (strain DK1622).